The following is a 155-amino-acid chain: MIDKSGYRANVAIVLLNKQNRVFWGQRRNRTSWQFPQGGVDTGETPLQAMYRELHEEIGLRPQDVEVIASTRDWYKYDIPDSLVRTKEPICIGQKQKWFLLKLKSPESYIDLDANDSPEFDNWRWVSYWYPINHVVYFKQEVYRKALTYFKEYIA.

The Nudix hydrolase domain maps to 6-148; sequence GYRANVAIVL…KQEVYRKALT (143 aa). The short motif at 38–59 is the Nudix box element; that stretch reads GGVDTGETPLQAMYRELHEEIG.

The protein belongs to the Nudix hydrolase family. RppH subfamily. Requires a divalent metal cation as cofactor.

Its function is as follows. Accelerates the degradation of transcripts by removing pyrophosphate from the 5'-end of triphosphorylated RNA, leading to a more labile monophosphorylated state that can stimulate subsequent ribonuclease cleavage. This is RNA pyrophosphohydrolase from Francisella tularensis subsp. mediasiatica (strain FSC147).